A 124-amino-acid polypeptide reads, in one-letter code: Small ribosomal subunit protein bS6 (124 aa).

The interval 96 to 124 (ETAPSPMMKEVQREEARKAAQTTTEGQAA) is disordered. Polar residues predominate over residues 115 to 124 (AQTTTEGQAA).

It belongs to the bacterial ribosomal protein bS6 family.

Binds together with bS18 to 16S ribosomal RNA. In Cupriavidus pinatubonensis (strain JMP 134 / LMG 1197) (Cupriavidus necator (strain JMP 134)), this protein is Small ribosomal subunit protein bS6.